The chain runs to 297 residues: Ribosomal RNA small subunit methyltransferase H (297 aa).

S-adenosyl-L-methionine is bound by residues 36–38, Asp56, Leu90, Asp104, and His111; that span reads GGH.

The protein belongs to the methyltransferase superfamily. RsmH family.

Its subcellular location is the cytoplasm. The enzyme catalyses cytidine(1402) in 16S rRNA + S-adenosyl-L-methionine = N(4)-methylcytidine(1402) in 16S rRNA + S-adenosyl-L-homocysteine + H(+). Its function is as follows. Specifically methylates the N4 position of cytidine in position 1402 (C1402) of 16S rRNA. This chain is Ribosomal RNA small subunit methyltransferase H, found in Dictyoglomus thermophilum (strain ATCC 35947 / DSM 3960 / H-6-12).